The sequence spans 392 residues: Tyrosine--tRNA ligase (392 aa).

A 'HIGH' region motif is present at residues 39-48 (PTAPDIHIGH). Positions 223-227 (KMSKS) match the 'KMSKS' region motif. Residue lysine 226 coordinates ATP. The 61-residue stretch at 331 to 391 (IGIAQLLKQA…GKRRFARVVL (61 aa)) folds into the S4 RNA-binding domain.

This sequence belongs to the class-I aminoacyl-tRNA synthetase family. TyrS type 2 subfamily. In terms of assembly, homodimer.

The protein localises to the cytoplasm. The enzyme catalyses tRNA(Tyr) + L-tyrosine + ATP = L-tyrosyl-tRNA(Tyr) + AMP + diphosphate + H(+). In terms of biological role, catalyzes the attachment of tyrosine to tRNA(Tyr) in a two-step reaction: tyrosine is first activated by ATP to form Tyr-AMP and then transferred to the acceptor end of tRNA(Tyr). This Ralstonia nicotianae (strain ATCC BAA-1114 / GMI1000) (Ralstonia solanacearum) protein is Tyrosine--tRNA ligase.